The primary structure comprises 194 residues: Imidazoleglycerol-phosphate dehydratase (194 aa).

It belongs to the imidazoleglycerol-phosphate dehydratase family.

It localises to the cytoplasm. The catalysed reaction is D-erythro-1-(imidazol-4-yl)glycerol 3-phosphate = 3-(imidazol-4-yl)-2-oxopropyl phosphate + H2O. It functions in the pathway amino-acid biosynthesis; L-histidine biosynthesis; L-histidine from 5-phospho-alpha-D-ribose 1-diphosphate: step 6/9. The chain is Imidazoleglycerol-phosphate dehydratase from Bacillus cereus (strain G9842).